Here is a 78-residue protein sequence, read N- to C-terminus: Major outer membrane lipoprotein Lpp (78 aa).

A signal peptide spans 1 to 20 (MNRTKLVLGAVILGSTLLAG). A lipid anchor (N-palmitoyl cysteine) is attached at Cys21. A lipid anchor (S-diacylglycerol cysteine) is attached at Cys21. Positions 22–75 (SSNAKIDQLSTDVQTLNAKVDQLSNDVTAIRSDVQAAKDDAARANQRLDNQAHS) form a coiled coil. Repeats lie at residues 24-34 (NAKIDQLSTDV) and 38-48 (NAKVDQLSNDV). Lys78 carries the post-translational modification N6-murein peptidoglycan lysine.

Belongs to the Lpp family. In terms of assembly, homotrimer.

The protein localises to the cell outer membrane. The protein resides in the secreted. Its subcellular location is the cell wall. In terms of biological role, a highly abundant outer membrane lipoprotein that controls the distance between the inner and outer membranes. The only protein known to be covalently linked to the peptidoglycan network (PGN). Also non-covalently binds the PGN. The link between the cell outer membrane and PGN contributes to maintenance of the structural and functional integrity of the cell envelope, and maintains the correct distance between the PGN and the outer membrane. The protein is Major outer membrane lipoprotein Lpp of Erwinia amylovora (Fire blight bacteria).